Here is a 380-residue protein sequence, read N- to C-terminus: Glucose-1-phosphate adenylyltransferase (380 aa).

Residues Gly-164, 179 to 180, and Ser-190 each bind alpha-D-glucose 1-phosphate; that span reads EK.

This sequence belongs to the bacterial/plant glucose-1-phosphate adenylyltransferase family. In terms of assembly, homotetramer.

It carries out the reaction alpha-D-glucose 1-phosphate + ATP + H(+) = ADP-alpha-D-glucose + diphosphate. Its pathway is glycan biosynthesis; glycogen biosynthesis. Functionally, involved in the biosynthesis of ADP-glucose, a building block required for the elongation reactions to produce glycogen. Catalyzes the reaction between ATP and alpha-D-glucose 1-phosphate (G1P) to produce pyrophosphate and ADP-Glc. This Lactococcus lactis subsp. lactis (strain IL1403) (Streptococcus lactis) protein is Glucose-1-phosphate adenylyltransferase.